The primary structure comprises 192 residues: uncharacterized protein (192 aa).

Positions 29-160 (HRQAAVLIPI…PLDIYRRGDS (132 aa)) constitute a Nudix hydrolase domain. The Nudix box motif lies at 67 to 89 (GAVDDTDASVIAAALREAEEEVA). E83 and E87 together coordinate Mg(2+).

It belongs to the Nudix hydrolase family. PCD1 subfamily. The cofactor is Mn(2+). Mg(2+) is required as a cofactor.

Its function is as follows. Probably mediates the hydrolysis of some nucleoside diphosphate derivatives. This is an uncharacterized protein from Shigella flexneri serotype 5b (strain 8401).